The following is a 395-amino-acid chain: Nicotinamide/nicotinic acid mononucleotide adenylyltransferase 2 (395 aa).

Disordered stretches follow at residues 1 to 34 (MDPT…SGPI) and 62 to 102 (KKNA…NGID). Pro residues predominate over residues 9 to 24 (FKPPQPNEELQPPPDP). Phosphoserine is present on residues Ser85, Ser89, and Ser90. Residues Ser167 and Phe168 each contribute to the NAD(+) site. Residues His175 and Arg209 each contribute to the ATP site. Thr247, Gly282, Asp284, Trp295, Arg314, and Asn345 together coordinate NAD(+). Position 350-353 (350-353 (TKVR)) interacts with ATP.

Belongs to the eukaryotic NMN adenylyltransferase family. The cofactor is Co(2+).

It localises to the nucleus. The catalysed reaction is beta-nicotinamide D-ribonucleotide + ATP + H(+) = diphosphate + NAD(+). The enzyme catalyses nicotinate beta-D-ribonucleotide + ATP + H(+) = deamido-NAD(+) + diphosphate. It participates in cofactor biosynthesis; NAD(+) biosynthesis; deamido-NAD(+) from nicotinate D-ribonucleotide: step 1/1. It functions in the pathway cofactor biosynthesis; NAD(+) biosynthesis; NAD(+) from nicotinamide D-ribonucleotide: step 1/1. Functionally, catalyzes the formation of NAD(+) from nicotinamide mononucleotide (NMN) and ATP. Can also use the deamidated form; nicotinic acid mononucleotide (NaMN) as substrate to form deamido-NAD(+) (NaAD). Key enzyme in both de novo and salvage pathways for NAD(+) biosynthesis. Predominantly acts in the salvage pathways via NMN. The chain is Nicotinamide/nicotinic acid mononucleotide adenylyltransferase 2 from Saccharomyces cerevisiae (strain ATCC 204508 / S288c) (Baker's yeast).